The primary structure comprises 332 residues: 4-hydroxythreonine-4-phosphate dehydrogenase (332 aa).

Substrate-binding residues include His-136 and Thr-137. A divalent metal cation-binding residues include His-166, His-211, and His-266. Lys-274, Asn-283, and Arg-292 together coordinate substrate.

It belongs to the PdxA family. As to quaternary structure, homodimer. Requires Zn(2+) as cofactor. Mg(2+) serves as cofactor. Co(2+) is required as a cofactor.

The protein resides in the cytoplasm. It carries out the reaction 4-(phosphooxy)-L-threonine + NAD(+) = 3-amino-2-oxopropyl phosphate + CO2 + NADH. It functions in the pathway cofactor biosynthesis; pyridoxine 5'-phosphate biosynthesis; pyridoxine 5'-phosphate from D-erythrose 4-phosphate: step 4/5. Its function is as follows. Catalyzes the NAD(P)-dependent oxidation of 4-(phosphooxy)-L-threonine (HTP) into 2-amino-3-oxo-4-(phosphooxy)butyric acid which spontaneously decarboxylates to form 3-amino-2-oxopropyl phosphate (AHAP). The chain is 4-hydroxythreonine-4-phosphate dehydrogenase from Wigglesworthia glossinidia brevipalpis.